Reading from the N-terminus, the 493-residue chain is Cobyric acid synthase (493 aa).

A GATase cobBQ-type domain is found at 255-441; it reads ELEIAVLRLP…LHGLLENGRW (187 aa). Residue Cys336 is the Nucleophile of the active site. The active site involves His433.

This sequence belongs to the CobB/CobQ family. CobQ subfamily.

It functions in the pathway cofactor biosynthesis; adenosylcobalamin biosynthesis. Functionally, catalyzes amidations at positions B, D, E, and G on adenosylcobyrinic A,C-diamide. NH(2) groups are provided by glutamine, and one molecule of ATP is hydrogenolyzed for each amidation. The polypeptide is Cobyric acid synthase (Synechococcus sp. (strain RCC307)).